A 417-amino-acid chain; its full sequence is Phosphoglycerate kinase (417 aa).

(2R)-3-phosphoglycerate-binding residues include Val23, Asp24, Phe25, Asn26, Gln39, Arg40, Ser63, His64, Gly66, Arg67, Leu122, Arg123, His170, and Arg171. Gly214 serves as a coordination point for ADP. A CDP-binding site is contributed by Gly214. AMP-binding residues include Ala215 and Lys216. Position 215 (Ala215) interacts with ATP. Mg(2+) is bound at residue Ala215. Asp219 provides a ligand contact to CDP. Residue Asp219 participates in Mg(2+) binding. Lys220 is a binding site for AMP. An ATP-binding site is contributed by Lys220. Residue Gly238 participates in ADP binding. Residue Gly238 participates in CDP binding. Residues Gly239 and Gly313 each coordinate AMP. ATP is bound by residues Gly239 and Gly313. Positions 338, 340, and 343 each coordinate CDP. Phe343 provides a ligand contact to ADP. Position 344 (Glu344) interacts with AMP. ATP-binding residues include Glu344, Asp375, and Thr376. Asp375 is a binding site for Mg(2+).

The protein belongs to the phosphoglycerate kinase family. Monomer. Mg(2+) is required as a cofactor.

It is found in the cytoplasm. Its subcellular location is the mitochondrion. The enzyme catalyses (2R)-3-phosphoglycerate + ATP = (2R)-3-phospho-glyceroyl phosphate + ADP. It functions in the pathway carbohydrate degradation; glycolysis; pyruvate from D-glyceraldehyde 3-phosphate: step 2/5. In terms of biological role, catalyzes one of the two ATP producing reactions in the glycolytic pathway via the reversible conversion of 1,3-diphosphoglycerate to 3-phosphoglycerate. Both L- and D- forms of purine and pyrimidine nucleotides can be used as substrates, but the activity is much lower on pyrimidines. Negatively regulates the biosynthesis of acetyl-CoA from pyruvate in the mitochondrion. The polypeptide is Phosphoglycerate kinase (pgk1) (Hypocrea rufa (Trichoderma viride)).